We begin with the raw amino-acid sequence, 100 residues long: Large ribosomal subunit protein bL21 (100 aa).

Belongs to the bacterial ribosomal protein bL21 family. Part of the 50S ribosomal subunit. Contacts protein L20.

Functionally, this protein binds to 23S rRNA in the presence of protein L20. The sequence is that of Large ribosomal subunit protein bL21 from Paramagnetospirillum magneticum (strain ATCC 700264 / AMB-1) (Magnetospirillum magneticum).